The chain runs to 311 residues: 5'-adenylylsulfate reductase-like 3 (311 aa).

The first 22 residues, 1 to 22, serve as a signal peptide directing secretion; it reads MATRLLCWTALLLPIIAATAAA. Residues 23–164 form the Thioredoxin domain; that stretch reads SPLPEACPVP…LAAFYRDVSG (142 aa). N-linked (GlcNAc...) asparagine glycosylation occurs at Asn139. Residues 210-230 form a helical membrane-spanning segment; the sequence is LALATAFVILRLLYLLFPKIG. Residues Asn281 and Asn305 are each glycosylated (N-linked (GlcNAc...) asparagine).

The protein resides in the membrane. The chain is 5'-adenylylsulfate reductase-like 3 (APRL3) from Oryza sativa subsp. japonica (Rice).